Reading from the N-terminus, the 465-residue chain is GTPase Der (465 aa).

EngA-type G domains lie at 3 to 167 (PLVA…PEEG) and 179 to 352 (IRIA…ESAN). Residues 9–16 (GRPNVGKS), 57–61 (DTGGI), 119–122 (NKID), 185–192 (GRPNVGKS), 232–236 (DTAGL), and 297–300 (NKWD) each bind GTP. Residues 353–437 (KTFTTSEVNK…PVSFIFREGT (85 aa)) enclose the KH-like domain.

It belongs to the TRAFAC class TrmE-Era-EngA-EngB-Septin-like GTPase superfamily. EngA (Der) GTPase family. Associates with the 50S ribosomal subunit.

In terms of biological role, GTPase that plays an essential role in the late steps of ribosome biogenesis. In Stenotrophomonas maltophilia (strain K279a), this protein is GTPase Der.